Here is a 427-residue protein sequence, read N- to C-terminus: Enolase (427 aa).

Q163 contacts (2R)-2-phosphoglycerate. E205 acts as the Proton donor in catalysis. Residues D242, E285, and D312 each contribute to the Mg(2+) site. Residues K337, R366, S367, and K388 each contribute to the (2R)-2-phosphoglycerate site. K337 (proton acceptor) is an active-site residue.

Belongs to the enolase family. Requires Mg(2+) as cofactor.

The protein localises to the cytoplasm. It localises to the secreted. It is found in the cell surface. It catalyses the reaction (2R)-2-phosphoglycerate = phosphoenolpyruvate + H2O. The protein operates within carbohydrate degradation; glycolysis; pyruvate from D-glyceraldehyde 3-phosphate: step 4/5. Functionally, catalyzes the reversible conversion of 2-phosphoglycerate (2-PG) into phosphoenolpyruvate (PEP). It is essential for the degradation of carbohydrates via glycolysis. In Bradyrhizobium sp. (strain ORS 278), this protein is Enolase.